The primary structure comprises 284 residues: CBY1-interacting BAR domain-containing protein 1-A (284 aa).

Residues 1–48 (MSQTPEARARDNQTRQIQESVNNVEKHFGELCQIFAGYVRKTARLRDK) constitute a mitochondrion transit peptide. Residues 11–221 (DNQTRQIQES…DIDEEEDLEV (211 aa)) are BAR-like. 2 coiled-coil regions span residues 142-184 (RQII…IKKL) and 260-284 (NRQKNRIEDEDEEEEDDENSTEDEN). Polar residues predominate over residues 242 to 261 (SRTGSTSRGPSVISQPPGNR). The disordered stretch occupies residues 242–284 (SRTGSTSRGPSVISQPPGNRQKNRIEDEDEEEEDDENSTEDEN). Positions 267–284 (EDEDEEEEDDENSTEDEN) are enriched in acidic residues.

Belongs to the CIBAR family.

It is found in the cytoplasm. It localises to the cytoskeleton. The protein resides in the microtubule organizing center. The protein localises to the centrosome. Its subcellular location is the centriole. It is found in the nucleus. It localises to the mitochondrion inner membrane. The protein resides in the cell projection. The protein localises to the cilium. Its subcellular location is the flagellum. Plays a critical role in regulating mitochondrial ultrastructure and function by maintaining the integrity of mitochondrial morphology, particularly the organization of cristae. Plays a crucial role in ciliogenesis. Plays a key role in the correct positioning of the annulus, a septin-based ring structure in the sperm flagellum, serving both as a physical barrier and a membrane diffusion barrier that separates the midpiece (MP) from the principal piece (PP). The protein is CBY1-interacting BAR domain-containing protein 1-A of Xenopus laevis (African clawed frog).